The sequence spans 128 residues: Large-conductance mechanosensitive channel (128 aa).

Residues M1–V16 lie on the Cytoplasmic side of the membrane. The helical transmembrane segment at V17 to L45 threads the bilayer. Residues G46–N74 lie on the Periplasmic side of the membrane. The chain crosses the membrane as a helical span at residues Y75 to M94. Over M95–K128 the chain is Cytoplasmic.

The protein belongs to the MscL family. In terms of assembly, homopentamer.

The protein resides in the cell inner membrane. In terms of biological role, channel that opens in response to stretch forces in the membrane lipid bilayer. Forms a nonselective ion channel with a conductance of about 4 nanosiemens. May participate in the regulation of osmotic pressure changes within the cell. This is Large-conductance mechanosensitive channel from Haemophilus influenzae (strain ATCC 51907 / DSM 11121 / KW20 / Rd).